We begin with the raw amino-acid sequence, 311 residues long: Delta(1)-pyrroline-2-carboxylate/Delta(1)-piperideine-2-carboxylate reductase (311 aa).

The protein belongs to the ornithine cyclodeaminase/mu-crystallin family. As to quaternary structure, homodimer.

The enzyme catalyses L-pipecolate + NAD(+) = Delta(1)-piperideine-2-carboxylate + NADH + H(+). It carries out the reaction L-pipecolate + NADP(+) = Delta(1)-piperideine-2-carboxylate + NADPH + H(+). The catalysed reaction is L-proline + NAD(+) = 1-pyrroline-2-carboxylate + NADH + H(+). It catalyses the reaction L-proline + NADP(+) = 1-pyrroline-2-carboxylate + NADPH + H(+). The protein operates within amino-acid degradation. Its function is as follows. Catalyzes the reduction of both Delta(1)-pyrroline-2-carboxylate (Pyr2C) and Delta(1)-piperideine-2-carboxylate (Pip2C) to L-proline and L-pipecolate, respectively, using NADPH or NADH as the electron donor. Can also catalyze the reverse oxidation reactions, albeit at a much lower rate. Together with LhpH, is involved in a trans-3-hydroxy-L-proline (t3LHyp) degradation pathway to L-proline, which allows A.brasilense to grow on t3LHyp as a sole carbon source. Also appears to be involved in D-proline and D-lysine metabolism. Does not show ornithine cyclodeaminase (OCD) activity. The protein is Delta(1)-pyrroline-2-carboxylate/Delta(1)-piperideine-2-carboxylate reductase of Azospirillum brasilense.